We begin with the raw amino-acid sequence, 342 residues long: Isopentenyl-diphosphate delta-isomerase (342 aa).

Arg11–Lys12 contributes to the substrate binding site. FMN-binding positions include Ser68, Ser69–Thr71, Ser99, and Asn128. Position 99–101 (Ser99–Arg101) interacts with substrate. Gln162 lines the substrate pocket. Glu163 contacts Mg(2+). FMN-binding positions include Lys194, Ser219, Thr224, Gly275 to Arg277, and Ala296 to Lys297.

The protein belongs to the IPP isomerase type 2 family. In terms of assembly, homooctamer. Dimer of tetramers. FMN serves as cofactor. Requires NADPH as cofactor. The cofactor is Mg(2+).

It localises to the cytoplasm. It carries out the reaction isopentenyl diphosphate = dimethylallyl diphosphate. Functionally, involved in the biosynthesis of isoprenoids. Catalyzes the 1,3-allylic rearrangement of the homoallylic substrate isopentenyl (IPP) to its allylic isomer, dimethylallyl diphosphate (DMAPP). This Legionella pneumophila subsp. pneumophila (strain Philadelphia 1 / ATCC 33152 / DSM 7513) protein is Isopentenyl-diphosphate delta-isomerase.